The chain runs to 515 residues: Membrane-bound transcription factor site-2 protease (515 aa).

The Cytoplasmic segment spans residues 1-3 (MIP). A helical membrane pass occupies residues 4-24 (VSLLVVVVGGWTAVYLADLVL). The Lumenal portion of the chain corresponds to 25 to 74 (KSSVYFKHSYEDWLENNGLSISPFHIRWQTSIFNRAFYSWGRRKARMLYQ). Helical transmembrane passes span 75-95 (WFNF…FLLG) and 96-107 (KTLMQTLAQMMA). Topologically, residues 108 to 140 (DSPSPYSSSSSSSSSSSSSSSSSSSLHNEQVLQ) are lumenal. The chain crosses the membrane as a helical span at residues 141–165 (VVVPGINLPVNQLTYFFAAVLISGV). A Zn(2+)-binding site is contributed by His-167. Glu-168 is an active-site residue. 3 helical membrane passes run 170-182 (GHGI…QVRF), 183-205 (NGFG…TTHL), and 225-247 (FVLA…PFYY). A Zn(2+)-binding site is contributed by His-171. Residues 248–442 (TGVGVLITEV…LPVIVETFVK (195 aa)) lie on the Lumenal side of the membrane. A glycan (N-linked (GlcNAc...) asparagine) is linked at Asn-333. 2 helical membrane passes run 443–460 (YLIS…VPCF) and 461–472 (ALDGQWILNSFL). Residues 473-488 (DATLTSVIGDNDVKDL) are Lumenal-facing. The helical transmembrane segment at 489-509 (IGFFILLGGSVLLAANVTLGL) threads the bilayer. The Cytoplasmic segment spans residues 510-515 (WMVTAR).

Belongs to the peptidase M50A family. Zn(2+) is required as a cofactor.

The protein localises to the membrane. It localises to the cytoplasm. The protein resides in the golgi apparatus membrane. It carries out the reaction Cleaves several transcription factors that are type-2 transmembrane proteins within membrane-spanning domains. Known substrates include sterol regulatory element-binding protein (SREBP) -1, SREBP-2 and forms of the transcriptional activator ATF6. SREBP-2 is cleaved at the site 477-DRSRILL-|-CVLTFLCLSFNPLTSLLQWGGA-505. The residues Asn-Pro, 11 residues distal to the site of cleavage in the membrane-spanning domain, are important for cleavage by S2P endopeptidase. Replacement of either of these residues does not prevent cleavage, but there is no cleavage if both of these residues are replaced.. Its function is as follows. Zinc metalloprotease that mediates intramembrane proteolysis of proteins such as ATF6, ATF6B, SREBF1/SREBP1 and SREBF2/SREBP2. Catalyzes the second step in the proteolytic activation of the sterol regulatory element-binding proteins (SREBPs) SREBF1/SREBP1 and SREBF2/SREBP2: cleaves SREBPs within the first transmembrane segment, thereby releasing the N-terminal segment with a portion of the transmembrane segment attached. Mature N-terminal SREBP fragments shuttle to the nucleus and activate gene transcription. Also mediates the second step in the proteolytic activation of the cyclic AMP-dependent transcription factor ATF-6 (ATF6 and ATF6B). Involved in intramembrane proteolysis during bone formation. In astrocytes and osteoblasts, upon DNA damage and ER stress, mediates the second step of the regulated intramembrane proteolytic activation of the transcription factor CREB3L1, leading to the inhibition of cell-cycle progression. This Mus musculus (Mouse) protein is Membrane-bound transcription factor site-2 protease (Mbtps2).